Reading from the N-terminus, the 122-residue chain is Urease subunit beta (122 aa).

Residues 102-122 (DGGTAVAGEPRPGIAAERDHQ) are disordered.

It belongs to the urease beta subunit family. Heterotrimer of UreA (gamma), UreB (beta) and UreC (alpha) subunits. Three heterotrimers associate to form the active enzyme.

It is found in the cytoplasm. The catalysed reaction is urea + 2 H2O + H(+) = hydrogencarbonate + 2 NH4(+). The protein operates within nitrogen metabolism; urea degradation; CO(2) and NH(3) from urea (urease route): step 1/1. The polypeptide is Urease subunit beta (Paenarthrobacter aurescens (strain TC1)).